Here is an 81-residue protein sequence, read N- to C-terminus: Large ribosomal subunit protein bL27 (81 aa).

The segment covering 1-11 (MATSKSGGSSK) has biased composition (polar residues). Residues 1–23 (MATSKSGGSSKNGRDSISKRLGV) are disordered.

This sequence belongs to the bacterial ribosomal protein bL27 family.

The sequence is that of Large ribosomal subunit protein bL27 from Borrelia garinii subsp. bavariensis (strain ATCC BAA-2496 / DSM 23469 / PBi) (Borreliella bavariensis).